Here is a 129-residue protein sequence, read N- to C-terminus: Large ribosomal subunit protein uL22 (129 aa).

This sequence belongs to the universal ribosomal protein uL22 family. As to quaternary structure, part of the 50S ribosomal subunit.

This protein binds specifically to 23S rRNA; its binding is stimulated by other ribosomal proteins, e.g. L4, L17, and L20. It is important during the early stages of 50S assembly. It makes multiple contacts with different domains of the 23S rRNA in the assembled 50S subunit and ribosome. Functionally, the globular domain of the protein is located near the polypeptide exit tunnel on the outside of the subunit, while an extended beta-hairpin is found that lines the wall of the exit tunnel in the center of the 70S ribosome. This chain is Large ribosomal subunit protein uL22, found in Rhizobium etli (strain ATCC 51251 / DSM 11541 / JCM 21823 / NBRC 15573 / CFN 42).